A 528-amino-acid polypeptide reads, in one-letter code: Glucose-6-phosphate isomerase (528 aa).

The Proton donor role is filled by glutamate 322. Active-site residues include histidine 351 and lysine 455.

Belongs to the GPI family.

It localises to the cytoplasm. The enzyme catalyses alpha-D-glucose 6-phosphate = beta-D-fructose 6-phosphate. The protein operates within carbohydrate biosynthesis; gluconeogenesis. It participates in carbohydrate degradation; glycolysis; D-glyceraldehyde 3-phosphate and glycerone phosphate from D-glucose: step 2/4. Functionally, catalyzes the reversible isomerization of glucose-6-phosphate to fructose-6-phosphate. The chain is Glucose-6-phosphate isomerase from Trichormus variabilis (strain ATCC 29413 / PCC 7937) (Anabaena variabilis).